The sequence spans 186 residues: MILPITIYSDEVLRRKAKPLKGIDTSHEELIGNMIESMRNASGIGLAAPQIGLSMRLLIVDLSPVQGYENAEPMVVINPHILAVKGYNAMEEGCLSIPDIHADVVRPSSIQLKYRNEHFEERVDEFSALMARVLQHEIDHLDGTLFVDKLQRRDRRKVQKSLEDIAAGKVHTTYPVAEINQGAKAS.

Residues Cys94 and His136 each contribute to the Fe cation site. Glu137 is an active-site residue. His140 serves as a coordination point for Fe cation.

This sequence belongs to the polypeptide deformylase family. The cofactor is Fe(2+).

It catalyses the reaction N-terminal N-formyl-L-methionyl-[peptide] + H2O = N-terminal L-methionyl-[peptide] + formate. Its function is as follows. Removes the formyl group from the N-terminal Met of newly synthesized proteins. Requires at least a dipeptide for an efficient rate of reaction. N-terminal L-methionine is a prerequisite for activity but the enzyme has broad specificity at other positions. The chain is Peptide deformylase from Prosthecochloris aestuarii (strain DSM 271 / SK 413).